The following is a 926-amino-acid chain: Transcriptional activator protein acu-15 (926 aa).

Positions 24–51 (CDRCRSKKIRCDGIRPCCSQCANVGFEC) form a DNA-binding region, zn(2)-C6 fungal-type. Disordered regions lie at residues 100–129 (KMHSNRSRSAEPPRSTPAAEIKRDSGTPAK), 602–649 (LPQS…SASL), and 667–801 (TPQH…TSTG). Basic and acidic residues predominate over residues 119 to 129 (EIKRDSGTPAK). Low complexity-rich tracts occupy residues 623–632 (AQQGSPSPSA) and 669–681 (QHQQYQHQQLQQQ). Composition is skewed to polar residues over residues 689 to 703 (ARSQTSFDNLRQKAQ) and 726 to 736 (RTSTGTQSTPN). Positions 740 to 792 (LSLSSPQSPVSPVQMRSQPHQLQQQQQQQPQPQQQQQQHQRSSIASSHSQQGQ) are enriched in low complexity.

It localises to the nucleus. Functionally, positive regulator of acetate induction. The sequence is that of Transcriptional activator protein acu-15 (acu-15) from Neurospora crassa (strain ATCC 24698 / 74-OR23-1A / CBS 708.71 / DSM 1257 / FGSC 987).